Reading from the N-terminus, the 707-residue chain is D-(-)-3-hydroxybutyrate oligomer hydrolase (707 aa).

The first 32 residues, 1 to 32 (MASVFKVRSASGHVPVVRTLAAMMAVTVVLTA), serve as a signal peptide directing secretion. Residue Ser-321 is the Charge relay system of the active site.

Belongs to the D-(-)-3-hydroxybutyrate oligomer hydrolase family.

The protein resides in the secreted. It carries out the reaction (3R)-hydroxybutanoate dimer + H2O = 2 (R)-3-hydroxybutanoate + H(+). It participates in lipid metabolism; butanoate metabolism. Functionally, participates in the degradation of poly-3-hydroxybutyrate (PHB). It works downstream of poly(3-hydroxybutyrate) depolymerase, hydrolyzing D(-)-3-hydroxybutyrate oligomers of various length (3HB-oligomers) into 3HB-monomers. This chain is D-(-)-3-hydroxybutyrate oligomer hydrolase, found in Paraburkholderia xenovorans (strain LB400).